We begin with the raw amino-acid sequence, 214 residues long: Thymidylate kinase (214 aa).

7–14 serves as a coordination point for ATP; that stretch reads GIEGAGKT.

It belongs to the thymidylate kinase family.

It carries out the reaction dTMP + ATP = dTDP + ADP. Phosphorylation of dTMP to form dTDP in both de novo and salvage pathways of dTTP synthesis. The chain is Thymidylate kinase from Desulfosudis oleivorans (strain DSM 6200 / JCM 39069 / Hxd3) (Desulfococcus oleovorans).